The sequence spans 77 residues: Conotoxin King-Kong 2 (77 aa).

Residues 1–22 form the signal peptide; the sequence is MKLTCMMIVAVLFLTAWTFVTA. Positions 23–49 are excised as a propeptide; sequence DDSGNGLENLFSKAHHEMKNPEASNLN. Disulfide bonds link C52–C67, C59–C71, and C66–C76. Residue C76 is modified to Cysteine amide.

The protein belongs to the conotoxin O1 superfamily. In terms of tissue distribution, expressed by the venom duct.

The protein localises to the secreted. This Conus textile (Cloth-of-gold cone) protein is Conotoxin King-Kong 2.